The chain runs to 155 residues: SsrA-binding protein (155 aa).

This sequence belongs to the SmpB family.

The protein resides in the cytoplasm. In terms of biological role, required for rescue of stalled ribosomes mediated by trans-translation. Binds to transfer-messenger RNA (tmRNA), required for stable association of tmRNA with ribosomes. tmRNA and SmpB together mimic tRNA shape, replacing the anticodon stem-loop with SmpB. tmRNA is encoded by the ssrA gene; the 2 termini fold to resemble tRNA(Ala) and it encodes a 'tag peptide', a short internal open reading frame. During trans-translation Ala-aminoacylated tmRNA acts like a tRNA, entering the A-site of stalled ribosomes, displacing the stalled mRNA. The ribosome then switches to translate the ORF on the tmRNA; the nascent peptide is terminated with the 'tag peptide' encoded by the tmRNA and targeted for degradation. The ribosome is freed to recommence translation, which seems to be the essential function of trans-translation. The chain is SsrA-binding protein from Chelativorans sp. (strain BNC1).